Here is a 422-residue protein sequence, read N- to C-terminus: UDP-N-acetylglucosamine 1-carboxyvinyltransferase (422 aa).

22-23 (KN) lines the phosphoenolpyruvate pocket. Arginine 93 contributes to the UDP-N-acetyl-alpha-D-glucosamine binding site. Cysteine 117 acts as the Proton donor in catalysis. 2-(S-cysteinyl)pyruvic acid O-phosphothioketal is present on cysteine 117. Residues 122 to 126 (RPVDL), aspartate 308, and leucine 330 contribute to the UDP-N-acetyl-alpha-D-glucosamine site.

This sequence belongs to the EPSP synthase family. MurA subfamily.

It localises to the cytoplasm. It carries out the reaction phosphoenolpyruvate + UDP-N-acetyl-alpha-D-glucosamine = UDP-N-acetyl-3-O-(1-carboxyvinyl)-alpha-D-glucosamine + phosphate. It participates in cell wall biogenesis; peptidoglycan biosynthesis. In terms of biological role, cell wall formation. Adds enolpyruvyl to UDP-N-acetylglucosamine. In Helicobacter pylori (strain ATCC 700392 / 26695) (Campylobacter pylori), this protein is UDP-N-acetylglucosamine 1-carboxyvinyltransferase.